The chain runs to 132 residues: Small ribosomal subunit protein uS8 (132 aa).

This sequence belongs to the universal ribosomal protein uS8 family. Part of the 30S ribosomal subunit. Contacts proteins S5 and S12.

Its function is as follows. One of the primary rRNA binding proteins, it binds directly to 16S rRNA central domain where it helps coordinate assembly of the platform of the 30S subunit. In Bartonella bacilliformis (strain ATCC 35685 / KC583 / Herrer 020/F12,63), this protein is Small ribosomal subunit protein uS8.